The following is a 1875-amino-acid chain: Neuron navigator 1 (1875 aa).

Met-1 bears the N-acetylmethionine mark. The interval 1-63 (MLGSSVKSVQ…GGSGSMAKAS (63 aa)) is disordered. 2 positions are modified to phosphoserine: Ser-93 and Ser-145. Disordered stretches follow at residues 115 to 230 (SDDM…EERA) and 280 to 339 (SSLR…VGGS). Position 162 is a phosphothreonine (Thr-162). Phosphoserine is present on residues Ser-197 and Ser-202. The stretch at 258 to 283 (ESQRKRTVQNVLDLRQNLEETMSSLR) forms a coiled coil. Residues 280-291 (SSLRGSQVTHSS) are compositionally biased toward polar residues. Ser-299, Ser-311, Ser-315, Ser-365, and Ser-394 each carry phosphoserine. The segment covering 304–318 (PRSVSSLSNRSSPLS) has biased composition (low complexity). 2 disordered regions span residues 391–463 (GYMS…RTDS) and 477–783 (SESE…AELP). 2 stretches are compositionally biased toward low complexity: residues 414–428 (DESSSISSGLSDASD) and 436–456 (NASSSLNSLPTTPTASRRSST). A phosphoserine mark is found at Ser-455, Ser-477, Ser-479, and Ser-493. Basic and acidic residues predominate over residues 479–489 (SEEKTPKKLEY). Residues 506–522 (ERPESCDDASKGGELKK) are compositionally biased toward basic and acidic residues. Residue Ser-531 is modified to Phosphoserine. Thr-537 carries the phosphothreonine modification. Ser-544 carries the phosphoserine modification. Thr-547 carries the phosphothreonine modification. Positions 558–569 (GKPEGKATDKGK) are enriched in basic and acidic residues. Thr-575 is modified (phosphothreonine). The segment covering 584–594 (AGRDRLSDAKK) has biased composition (basic and acidic residues). Composition is skewed to polar residues over residues 618–638 (GTATVMQTGSSATLSKIQKSS) and 648–658 (RKTSLDVSNSV). Phosphoserine is present on Ser-651. Arg-690 bears the Omega-N-methylarginine mark. Polar residues-rich tracts occupy residues 696–712 (VSSSIDPSLLSTKQGGL) and 726–735 (GRSTPAPVNQ). Positions 733 to 758 (VNQTDREKEKAKAKAVALDSDNISLK) form a coiled coil. Phosphoserine occurs at positions 752, 756, 762, 799, and 810. Positions 753–772 (DNISLKSIGSPESTPKNQAS) are enriched in polar residues. Disordered regions lie at residues 800–840 (LANL…PLPS) and 893–982 (MSLP…SPPA). Composition is skewed to low complexity over residues 807–818 (NSNSLDLPSSSD) and 893–902 (MSLPSAFPSS). Ser-998 is modified (phosphoserine). Thr-1004 bears the Phosphothreonine mark. The stretch at 1070 to 1161 (SSAEERMQSE…SEAQAVIQGA (92 aa)) forms a coiled coil. Thr-1168 carries the post-translational modification Phosphothreonine. 4 disordered regions span residues 1172–1202 (LRIKRQNSSDSISSLNSITSHSSIGSSKDAD), 1242–1306 (ATPD…KEVS), 1359–1381 (VAPGPSSGCTPGQVPGSSALSSP), and 1808–1841 (KLYHLPPPSVGPHSTASPPEDRTVKDSTPNSLDS). At Ser-1179 the chain carries Phosphoserine. A compositionally biased stretch (low complexity) spans 1179 to 1198 (SSDSISSLNSITSHSSIGSS). Polar residues predominate over residues 1244-1259 (PDSSAPSSPKLQHGST). The segment covering 1260–1281 (ETASPSIKSSTSSSVGTEVTET) has biased composition (low complexity). Residue Ser-1263 is modified to Phosphoserine. Residues 1301–1360 (EKKEVSELRSELWEKEMKLTDIRLEALNSAHQLDQLRETMHNMQLEVDLLKAENDRLKVA) are a coiled coil. A compositionally biased stretch (polar residues) spans 1365–1381 (SGCTPGQVPGSSALSSP). Phosphoserine is present on Ser-1380.

This sequence belongs to the Nav/unc-53 family. In terms of assembly, interacts with tubulin. In terms of tissue distribution, expressed in heart and brain. Present in brain (at protein level). In adult brain, found almost exclusively in areas of secondary neurogenesis from the hippocampus and the subventricular zone.

The protein resides in the cytoplasm. It is found in the cytoskeleton. May be involved in neuronal migration. The chain is Neuron navigator 1 (Nav1) from Mus musculus (Mouse).